Here is a 159-residue protein sequence, read N- to C-terminus: 3-hydroxyacyl-[acyl-carrier-protein] dehydratase FabZ (159 aa).

Histidine 58 is a catalytic residue.

This sequence belongs to the thioester dehydratase family. FabZ subfamily.

The protein localises to the cytoplasm. The enzyme catalyses a (3R)-hydroxyacyl-[ACP] = a (2E)-enoyl-[ACP] + H2O. In terms of biological role, involved in unsaturated fatty acids biosynthesis. Catalyzes the dehydration of short chain beta-hydroxyacyl-ACPs and long chain saturated and unsaturated beta-hydroxyacyl-ACPs. The protein is 3-hydroxyacyl-[acyl-carrier-protein] dehydratase FabZ of Helicobacter pylori (strain G27).